The primary structure comprises 126 residues: Large ribosomal subunit protein bL17 (126 aa).

Belongs to the bacterial ribosomal protein bL17 family. As to quaternary structure, part of the 50S ribosomal subunit. Contacts protein L32.

The chain is Large ribosomal subunit protein bL17 from Magnetococcus marinus (strain ATCC BAA-1437 / JCM 17883 / MC-1).